The primary structure comprises 246 residues: Uridylate kinase (246 aa).

18–21 (KLSG) provides a ligand contact to ATP. Gly60 provides a ligand contact to UMP. Residues Gly61 and Arg65 each coordinate ATP. UMP is bound by residues Asp80 and 141 to 148 (TGNPFFTT). Positions 168, 174, and 177 each coordinate ATP.

Belongs to the UMP kinase family. Homohexamer.

Its subcellular location is the cytoplasm. The enzyme catalyses UMP + ATP = UDP + ADP. Its pathway is pyrimidine metabolism; CTP biosynthesis via de novo pathway; UDP from UMP (UMPK route): step 1/1. Inhibited by UTP. Functionally, catalyzes the reversible phosphorylation of UMP to UDP. This chain is Uridylate kinase, found in Pseudomonas syringae pv. syringae (strain B728a).